The following is a 267-amino-acid chain: Cilia- and flagella-associated protein 300 (267 aa).

This sequence belongs to the CFAP300 family.

It localises to the cytoplasm. Its subcellular location is the cytoskeleton. It is found in the cilium axoneme. Its function is as follows. Cilium- and flagellum-specific protein that plays a role in axonemal structure organization and motility. May play a role in outer and inner dynein arm assembly. This Xenopus tropicalis (Western clawed frog) protein is Cilia- and flagella-associated protein 300.